The following is a 155-amino-acid chain: Small ribosomal subunit protein uS7cz/uS7cy (155 aa).

It belongs to the universal ribosomal protein uS7 family. As to quaternary structure, part of the 30S ribosomal subunit.

The protein localises to the plastid. Its subcellular location is the chloroplast. Its function is as follows. One of the primary rRNA binding proteins, it binds directly to 16S rRNA where it nucleates assembly of the head domain of the 30S subunit. This is Small ribosomal subunit protein uS7cz/uS7cy (rps7-A) from Daucus carota (Wild carrot).